Reading from the N-terminus, the 947-residue chain is Protein NLP8 (947 aa).

Disordered regions lie at residues 114-135 (RSSAQEMNSQFHRSSDSDELSG), 509-533 (STKKEGTKPGFRSSDMSNFPQTTSS), and 550-591 (SMFS…EKNV). Residues 126–135 (RSSDSDELSG) show a composition bias toward basic and acidic residues. Polar residues-rich tracts occupy residues 522-533 (SDMSNFPQTTSS) and 550-572 (SMFSGMSSDKENSITVSQGTLEQ). The segment covering 573-587 (DVSKARTPEKKKSTT) has biased composition (basic and acidic residues). Positions 577-671 (ARTPEKKKST…LDSVQGVEGG (95 aa)) constitute an RWP-RK domain. Positions 646–666 (RKINKVNRSLRKIQTVLDSVQ) form a coiled coil. Low complexity predominate over residues 805-815 (SCSISDSSNGS). The segment at 805 to 828 (SCSISDSSNGSGAVLRGSSSTSME) is disordered. The PB1 domain occupies 847–929 (TLIVKASYRE…HSVKFLVRDL (83 aa)).

It is found in the nucleus. Probable transcription factor. This Arabidopsis thaliana (Mouse-ear cress) protein is Protein NLP8 (NLP8).